A 441-amino-acid chain; its full sequence is Tol-Pal system protein TolB (441 aa).

The N-terminal stretch at Met1–Ala25 is a signal peptide.

It belongs to the TolB family. The Tol-Pal system is composed of five core proteins: the inner membrane proteins TolA, TolQ and TolR, the periplasmic protein TolB and the outer membrane protein Pal. They form a network linking the inner and outer membranes and the peptidoglycan layer.

The protein localises to the periplasm. Its function is as follows. Part of the Tol-Pal system, which plays a role in outer membrane invagination during cell division and is important for maintaining outer membrane integrity. The protein is Tol-Pal system protein TolB of Anaplasma marginale (strain St. Maries).